The primary structure comprises 314 residues: Fibrinogen-like protein 1 (314 aa).

The first 22 residues, 1-22 (MGEIRSFLLVTIALMMGREIWA), serve as a signal peptide directing secretion. Residues 25–59 (NSKCLLEQERLRAQVQQLETRVKQQQARIAQLMHE) are a coiled coil. The region spanning 76 to 308 (LGGKRQYADC…SVVMKIRPND (233 aa)) is the Fibrinogen C-terminal domain. 2 disulfides stabilise this stretch: Cys-85–Cys-114 and Cys-250–Cys-263.

Homodimer. Interacts (via the Fibrinogen C-terminal domain) with LAG3 (via Ig-like domains 1 and 2).

It is found in the secreted. In terms of biological role, immune suppressive molecule that inhibits antigen-specific T-cell activation by acting as a major ligand of LAG3. Responsible for LAG3 T-cell inhibitory function. Binds LAG3 independently from MHC class II (MHC-II). Secreted by, and promotes growth of, hepatocytes. The polypeptide is Fibrinogen-like protein 1 (Mesocricetus auratus (Golden hamster)).